The primary structure comprises 452 residues: tRNA modification GTPase MnmE (452 aa).

Positions 24, 81, and 120 each coordinate (6S)-5-formyl-5,6,7,8-tetrahydrofolate. Positions 217–373 constitute a TrmE-type G domain; sequence GIKTAIVGKT…LIMKIEQMHI (157 aa). Asn-227 contacts K(+). GTP-binding positions include 227–232, 246–252, and 271–274; these read NVGKSS, TDIHGTT, and DTAG. Residue Ser-231 participates in Mg(2+) binding. The K(+) site is built by Thr-246, Ile-248, and Thr-251. Thr-252 is a Mg(2+) binding site. Lys-452 is a binding site for (6S)-5-formyl-5,6,7,8-tetrahydrofolate.

The protein belongs to the TRAFAC class TrmE-Era-EngA-EngB-Septin-like GTPase superfamily. TrmE GTPase family. As to quaternary structure, homodimer. Heterotetramer of two MnmE and two MnmG subunits. K(+) is required as a cofactor.

Its subcellular location is the cytoplasm. Exhibits a very high intrinsic GTPase hydrolysis rate. Involved in the addition of a carboxymethylaminomethyl (cmnm) group at the wobble position (U34) of certain tRNAs, forming tRNA-cmnm(5)s(2)U34. In Mesoplasma florum (strain ATCC 33453 / NBRC 100688 / NCTC 11704 / L1) (Acholeplasma florum), this protein is tRNA modification GTPase MnmE.